The chain runs to 444 residues: Glutamate-1-semialdehyde 2,1-aminomutase (444 aa).

Position 267 is an N6-(pyridoxal phosphate)lysine (Lys267).

It belongs to the class-III pyridoxal-phosphate-dependent aminotransferase family. HemL subfamily. As to quaternary structure, homodimer. Pyridoxal 5'-phosphate serves as cofactor.

The protein resides in the cytoplasm. It carries out the reaction (S)-4-amino-5-oxopentanoate = 5-aminolevulinate. The protein operates within porphyrin-containing compound metabolism; protoporphyrin-IX biosynthesis; 5-aminolevulinate from L-glutamyl-tRNA(Glu): step 2/2. The chain is Glutamate-1-semialdehyde 2,1-aminomutase from Xylella fastidiosa (strain M12).